A 174-amino-acid polypeptide reads, in one-letter code: Large ribosomal subunit protein uL10 (174 aa).

It belongs to the universal ribosomal protein uL10 family. In terms of assembly, part of the ribosomal stalk of the 50S ribosomal subunit. The N-terminus interacts with L11 and the large rRNA to form the base of the stalk. The C-terminus forms an elongated spine to which L12 dimers bind in a sequential fashion forming a multimeric L10(L12)X complex.

Functionally, forms part of the ribosomal stalk, playing a central role in the interaction of the ribosome with GTP-bound translation factors. The polypeptide is Large ribosomal subunit protein uL10 (Methylibium petroleiphilum (strain ATCC BAA-1232 / LMG 22953 / PM1)).